We begin with the raw amino-acid sequence, 77 residues long: ATP synthase subunit c (77 aa).

2 helical membrane-spanning segments follow: residues 7-27 (AFKY…AALG) and 57-77 (VGLI…ILFL).

The protein belongs to the ATPase C chain family. As to quaternary structure, F-type ATPases have 2 components, F(1) - the catalytic core - and F(0) - the membrane proton channel. F(1) has five subunits: alpha(3), beta(3), gamma(1), delta(1), epsilon(1). F(0) has three main subunits: a(1), b(2) and c(10-14). The alpha and beta chains form an alternating ring which encloses part of the gamma chain. F(1) is attached to F(0) by a central stalk formed by the gamma and epsilon chains, while a peripheral stalk is formed by the delta and b chains.

Its subcellular location is the cell membrane. Its function is as follows. F(1)F(0) ATP synthase produces ATP from ADP in the presence of a proton or sodium gradient. F-type ATPases consist of two structural domains, F(1) containing the extramembraneous catalytic core and F(0) containing the membrane proton channel, linked together by a central stalk and a peripheral stalk. During catalysis, ATP synthesis in the catalytic domain of F(1) is coupled via a rotary mechanism of the central stalk subunits to proton translocation. Key component of the F(0) channel; it plays a direct role in translocation across the membrane. A homomeric c-ring of between 10-14 subunits forms the central stalk rotor element with the F(1) delta and epsilon subunits. The polypeptide is ATP synthase subunit c (Lactobacillus helveticus (strain DPC 4571)).